An 88-amino-acid chain; its full sequence is MTETELFKEGLNLMFSGMGFVIIFLLILIWAIGIVSKLINTFFPEPIPVAQAKKTVTPTQSAVVDDIERLRPVIVAAIAHHRRTQGLN.

Residues 13–35 (LMFSGMGFVIIFLLILIWAIGIV) traverse the membrane as a helical segment.

The protein belongs to the OadG family. In terms of assembly, heterotrimer of an alpha, a beta and a gamma subunit. It depends on Na(+) as a cofactor.

The protein resides in the cell membrane. It carries out the reaction oxaloacetate + 2 Na(+)(in) + H(+) = pyruvate + 2 Na(+)(out) + CO2. Its function is as follows. Catalyzes the decarboxylation of oxaloacetate coupled to Na(+) translocation. This Mannheimia succiniciproducens (strain KCTC 0769BP / MBEL55E) protein is Probable oxaloacetate decarboxylase gamma chain.